The following is a 273-amino-acid chain: Bifunctional protein FolD (273 aa).

Residues 149–151 (GLG) and V215 contribute to the NADP(+) site.

This sequence belongs to the tetrahydrofolate dehydrogenase/cyclohydrolase family. In terms of assembly, homodimer.

It carries out the reaction (6R)-5,10-methylene-5,6,7,8-tetrahydrofolate + NADP(+) = (6R)-5,10-methenyltetrahydrofolate + NADPH. The enzyme catalyses (6R)-5,10-methenyltetrahydrofolate + H2O = (6R)-10-formyltetrahydrofolate + H(+). It functions in the pathway one-carbon metabolism; tetrahydrofolate interconversion. In terms of biological role, catalyzes the oxidation of 5,10-methylenetetrahydrofolate to 5,10-methenyltetrahydrofolate and then the hydrolysis of 5,10-methenyltetrahydrofolate to 10-formyltetrahydrofolate. The protein is Bifunctional protein FolD of Mycoplasma genitalium (strain ATCC 33530 / DSM 19775 / NCTC 10195 / G37) (Mycoplasmoides genitalium).